The sequence spans 646 residues: RNase E specificity factor CsrD (646 aa).

Helical transmembrane passes span 10–30 and 135–155; these read FVTLLTGLTIFVTLLGCSLSF and MTTAPLTGAIGFIIVMLFLAV. The segment at 152 to 219 is HAMP-like; that stretch reads FLAVRWLQRQ…REQHSRLDTL (68 aa). Positions 194–224 form a coiled coil; the sequence is RTSSALDTLLREIQNAREQHSRLDTLIRSYA. A GGDEF domain is found at 254–387; it reads THGIVMMIRL…GGNSWAIYDD (134 aa). Residues 396–644 enclose the EAL domain; that stretch reads NVRWRTLIEQ…TNVKKYSQRY (249 aa).

The protein localises to the cell membrane. Serves as a specificity factor required for RNase E-mediated decay of the small global regulatory RNAs CsrB and CsrC, it is probably not a nuclease. Nor does its activity involve c-di-GMP, despite its domain composition. Positively modulates motility gene expression, is also required for curli expression. In Escherichia coli (strain K12), this protein is RNase E specificity factor CsrD (csrD).